Reading from the N-terminus, the 416-residue chain is Tyrosine--tRNA ligase (416 aa).

Y41 serves as a coordination point for L-tyrosine. Residues 46 to 55 carry the 'HIGH' region motif; that stretch reads ATASSLHAGH. Residues Y175 and Q179 each contribute to the L-tyrosine site. The 'KMSKS' region motif lies at 235–239; that stretch reads KMGKT. K238 is a binding site for ATP. One can recognise an S4 RNA-binding domain in the interval 349 to 416; the sequence is LPVAKAFVDA…KKKHVLLKPV (68 aa).

This sequence belongs to the class-I aminoacyl-tRNA synthetase family. TyrS type 1 subfamily. As to quaternary structure, homodimer.

It is found in the cytoplasm. It carries out the reaction tRNA(Tyr) + L-tyrosine + ATP = L-tyrosyl-tRNA(Tyr) + AMP + diphosphate + H(+). Catalyzes the attachment of tyrosine to tRNA(Tyr) in a two-step reaction: tyrosine is first activated by ATP to form Tyr-AMP and then transferred to the acceptor end of tRNA(Tyr). This is Tyrosine--tRNA ligase from Xanthobacter autotrophicus (strain ATCC BAA-1158 / Py2).